The primary structure comprises 631 residues: KIF-binding protein (631 aa).

Positions glutamate 60–cysteine 70 are enriched in acidic residues. Positions glutamate 60–phenylalanine 88 are disordered.

It belongs to the KIF-binding protein family. At 30 hpf, primarily expressed in central and peripheral neurons.

It localises to the cytoplasm. It is found in the cytoskeleton. In terms of biological role, activator of KIF1B plus-end-directed microtubule motor activity. Required for organization of axonal microtubules, and axonal outgrowth and maintenance during peripheral and central nervous system development. The sequence is that of KIF-binding protein (kifbp) from Danio rerio (Zebrafish).